Here is a 287-residue protein sequence, read N- to C-terminus: Bifunctional protein FolD (287 aa).

Residues 166–168 and Ile232 each bind NADP(+); that span reads GAS.

Belongs to the tetrahydrofolate dehydrogenase/cyclohydrolase family. Homodimer.

The enzyme catalyses (6R)-5,10-methylene-5,6,7,8-tetrahydrofolate + NADP(+) = (6R)-5,10-methenyltetrahydrofolate + NADPH. The catalysed reaction is (6R)-5,10-methenyltetrahydrofolate + H2O = (6R)-10-formyltetrahydrofolate + H(+). It functions in the pathway one-carbon metabolism; tetrahydrofolate interconversion. Functionally, catalyzes the oxidation of 5,10-methylenetetrahydrofolate to 5,10-methenyltetrahydrofolate and then the hydrolysis of 5,10-methenyltetrahydrofolate to 10-formyltetrahydrofolate. In Chromohalobacter salexigens (strain ATCC BAA-138 / DSM 3043 / CIP 106854 / NCIMB 13768 / 1H11), this protein is Bifunctional protein FolD.